The primary structure comprises 308 residues: Glucan 1,3-beta-glucosidase ARB_02797 (308 aa).

A signal peptide spans 1–20; the sequence is MRFSTALSLALAVSPAAVFA. Glu-120 serves as the catalytic Proton donor. Asn-126 carries N-linked (GlcNAc...) asparagine glycosylation. Residue Glu-220 is the Nucleophile of the active site.

The protein belongs to the glycosyl hydrolase 17 family.

The protein resides in the secreted. Its subcellular location is the cell wall. The protein localises to the cytoplasm. It catalyses the reaction Successive hydrolysis of beta-D-glucose units from the non-reducing ends of (1-&gt;3)-beta-D-glucans, releasing alpha-glucose.. Functionally, cell wall glucan 1,3-beta-glucosidase involved in cell wall biosynthesis and virulence. Crucial for delivery of beta-1,3-glucan to the biofilm matrix and for accumulation of mature matrix biomass. The protein is Glucan 1,3-beta-glucosidase ARB_02797 of Arthroderma benhamiae (strain ATCC MYA-4681 / CBS 112371) (Trichophyton mentagrophytes).